Here is a 235-residue protein sequence, read N- to C-terminus: Large ribosomal subunit protein uL1 (235 aa).

The protein belongs to the universal ribosomal protein uL1 family. In terms of assembly, part of the 50S ribosomal subunit.

Its function is as follows. Binds directly to 23S rRNA. The L1 stalk is quite mobile in the ribosome, and is involved in E site tRNA release. Protein L1 is also a translational repressor protein, it controls the translation of the L11 operon by binding to its mRNA. The sequence is that of Large ribosomal subunit protein uL1 from Mycobacterium bovis (strain ATCC BAA-935 / AF2122/97).